The sequence spans 732 residues: Catalase-peroxidase (732 aa).

Positions 1–45 are cleaved as a signal peptide; it reads MDTKVDNAGKCPVVHTHTAHGGRSNRDWWPNQLNLRILHQNSSLS. A cross-link (tryptophyl-tyrosyl-methioninium (Trp-Tyr) (with M-246)) is located at residues 97–220; sequence WHSAGTYRTG…LSAVQMGLIY (124 aa). Residue His98 is the Proton acceptor of the active site. The segment at residues 220-246 is a cross-link (tryptophyl-tyrosyl-methioninium (Tyr-Met) (with W-97)); that stretch reads YVNPEGPNGNPDPLAAARDIRETFARM. His261 is a heme b binding site.

It belongs to the peroxidase family. Peroxidase/catalase subfamily. In terms of assembly, homodimer or homotetramer. Heme b is required as a cofactor. In terms of processing, formation of the three residue Trp-Tyr-Met cross-link is important for the catalase, but not the peroxidase activity of the enzyme.

The enzyme catalyses H2O2 + AH2 = A + 2 H2O. The catalysed reaction is 2 H2O2 = O2 + 2 H2O. In terms of biological role, bifunctional enzyme with both catalase and broad-spectrum peroxidase activity. The sequence is that of Catalase-peroxidase from Rhizobium rhizogenes (strain K84 / ATCC BAA-868) (Agrobacterium radiobacter).